A 194-amino-acid polypeptide reads, in one-letter code: Outer-membrane lipoprotein LolB (194 aa).

The first 18 residues, 1 to 18, serve as a signal peptide directing secretion; sequence MTLLLRLFTLGCLLLLAG. Cys19 carries the N-palmitoyl cysteine lipid modification. A lipid anchor (S-diacylglycerol cysteine) is attached at Cys19.

It belongs to the LolB family. As to quaternary structure, monomer.

It localises to the cell outer membrane. Plays a critical role in the incorporation of lipoproteins in the outer membrane after they are released by the LolA protein. The chain is Outer-membrane lipoprotein LolB from Aeromonas hydrophila subsp. hydrophila (strain ATCC 7966 / DSM 30187 / BCRC 13018 / CCUG 14551 / JCM 1027 / KCTC 2358 / NCIMB 9240 / NCTC 8049).